Reading from the N-terminus, the 295-residue chain is Bifunctional protein FolD (295 aa).

NADP(+) contacts are provided by residues 177 to 179 (GRS) and serine 202.

This sequence belongs to the tetrahydrofolate dehydrogenase/cyclohydrolase family. Homodimer.

The enzyme catalyses (6R)-5,10-methylene-5,6,7,8-tetrahydrofolate + NADP(+) = (6R)-5,10-methenyltetrahydrofolate + NADPH. It catalyses the reaction (6R)-5,10-methenyltetrahydrofolate + H2O = (6R)-10-formyltetrahydrofolate + H(+). Its pathway is one-carbon metabolism; tetrahydrofolate interconversion. In terms of biological role, catalyzes the oxidation of 5,10-methylenetetrahydrofolate to 5,10-methenyltetrahydrofolate and then the hydrolysis of 5,10-methenyltetrahydrofolate to 10-formyltetrahydrofolate. This is Bifunctional protein FolD from Psychrobacter arcticus (strain DSM 17307 / VKM B-2377 / 273-4).